A 460-amino-acid polypeptide reads, in one-letter code: A-type ATP synthase subunit B (460 aa).

Belongs to the ATPase alpha/beta chains family. In terms of assembly, has multiple subunits with at least A(3), B(3), C, D, E, F, H, I and proteolipid K(x).

It localises to the cell membrane. Component of the A-type ATP synthase that produces ATP from ADP in the presence of a proton gradient across the membrane. The B chain is a regulatory subunit. In Methanosarcina barkeri, this protein is A-type ATP synthase subunit B.